A 371-amino-acid chain; its full sequence is Fe(3+) ions import ATP-binding protein FbpC (371 aa).

Positions 5–235 constitute an ABC transporter domain; it reads IKIENAQKRY…PANLFVATFI (231 aa). Residue 37 to 44 coordinates ATP; it reads GPSGCGKT.

Belongs to the ABC transporter superfamily. Fe(3+) ion importer (TC 3.A.1.10) family. The complex is composed of two ATP-binding proteins (FbpC), two transmembrane proteins (FbpB) and a solute-binding protein (FbpA).

The protein resides in the cell inner membrane. The enzyme catalyses Fe(3+)(out) + ATP + H2O = Fe(3+)(in) + ADP + phosphate + H(+). In terms of biological role, part of the ABC transporter complex FbpABC involved in Fe(3+) ions import. Responsible for energy coupling to the transport system. This Fusobacterium nucleatum subsp. nucleatum (strain ATCC 25586 / DSM 15643 / BCRC 10681 / CIP 101130 / JCM 8532 / KCTC 2640 / LMG 13131 / VPI 4355) protein is Fe(3+) ions import ATP-binding protein FbpC.